We begin with the raw amino-acid sequence, 268 residues long: Bidirectional sugar transporter N3 (268 aa).

Topologically, residues 1-7 are extracellular; that stretch reads MAISHNT. Residues 8–28 traverse the membrane as a helical segment; sequence LAFTFGMLGNVISFLVFLAPI. A MtN3/slv 1 domain is found at 10 to 96; the sequence is FTFGMLGNVI…ILYIIYAPRD (87 aa). Over 29 to 42 the chain is Cytoplasmic; it reads STFYRIYKKKSTEG. A helical transmembrane segment spans residues 43-63; that stretch reads FQSLPYLVALFSSMLWLYYAL. The Extracellular segment spans residues 64 to 70; it reads LKKDAFL. A helical transmembrane segment spans residues 71–91; sequence LITINSFGCVVETIYIILYII. The Cytoplasmic segment spans residues 92 to 103; the sequence is YAPRDARNLTFK. Residues 104–124 form a helical membrane-spanning segment; the sequence is LLSAMNVGSFALILIVTNYAV. Over 125–131 the chain is Extracellular; the sequence is HGPLRVQ. A MtN3/slv 2 domain is found at 131-214; it reads QVLGWVCVSL…QMLLYAIYRN (84 aa). A helical transmembrane segment spans residues 132 to 152; it reads VLGWVCVSLSVSVFAAPLSIV. The Cytoplasmic segment spans residues 153–165; sequence AQVVRTKSVEFMP. A helical transmembrane segment spans residues 166-186; the sequence is FNLSFTLTLSATMWFGYGFFL. Residues 187-190 are Extracellular-facing; sequence KDIC. The helical transmembrane segment at 191-211 threads the bilayer; that stretch reads IXLPNVLGXVLGLLQMLLYAI. The Cytoplasmic portion of the chain corresponds to 212–268; it reads YRNGGEKAMKKEKKAPIEPPKSIVIETQLEKIEQEKKNKDDDNEEKDKSEEPIGCGV. Residues 234–262 are a coiled coil; it reads IVIETQLEKIEQEKKNKDDDNEEKDKSEE. Residues 243-262 are compositionally biased toward basic and acidic residues; the sequence is IEQEKKNKDDDNEEKDKSEE. A disordered region spans residues 243–268; the sequence is IEQEKKNKDDDNEEKDKSEEPIGCGV.

This sequence belongs to the SWEET sugar transporter family. Forms homooligomers and/or heterooligomers.

The protein localises to the cell membrane. Functionally, mediates both low-affinity uptake and efflux of sugar across the plasma membrane. The sequence is that of Bidirectional sugar transporter N3 (N3) from Medicago truncatula (Barrel medic).